The sequence spans 370 residues: mRNA cap guanine-N(7) methyltransferase 1 (370 aa).

The segment covering Met-1 to Ser-11 has biased composition (low complexity). A disordered region spans residues Met-1–Glu-34. Residues Ser-61 to Arg-341 form the mRNA cap 0 methyltransferase domain. Residue Asn-70–Asn-71 coordinates mRNA. S-adenosyl-L-methionine is bound by residues Lys-74, Ala-92, Asp-114, Asp-150 to Cys-151, and Gln-172 to Ala-174.

Belongs to the class I-like SAM-binding methyltransferase superfamily. mRNA cap 0 methyltransferase family.

Its subcellular location is the nucleus. It catalyses the reaction a 5'-end (5'-triphosphoguanosine)-ribonucleoside in mRNA + S-adenosyl-L-methionine = a 5'-end (N(7)-methyl 5'-triphosphoguanosine)-ribonucleoside in mRNA + S-adenosyl-L-homocysteine. Functionally, mRNA-capping methyltransferase that methylates the N7 position of the added guanosine to the 5'-cap structure of mRNAs. Binds RNA containing 5'-terminal GpppC. The chain is mRNA cap guanine-N(7) methyltransferase 1 from Arabidopsis thaliana (Mouse-ear cress).